The primary structure comprises 162 residues: UPF0254 protein MTH1148 homolog (162 aa).

It belongs to the UPF0254 family.

The chain is UPF0254 protein MTH1148 homolog from Methanothermobacter thermautotrophicus (strain Winter) (Methanobacterium thermoautotrophicum).